The primary structure comprises 232 residues: MSGFAFKQFKVAHEQCAMKVSTDGILLGAWANLSNANSLLDIGTGTGLLALMCKQRSPQLTITAVEVDKNAYQQALQNIAASPWPNIEVHQQSIQTFNSAQPFDVVIANPPYFNHSLKGNNKARNIARHTDGLSFAELISAFKKLSHAGSTFSLILPTTEVAVFIELATQNGLFLNTHCQVKATPNKAISRSLMTFSYINQSIVESALCIKDNENNYSEDYIALCKAFYLKM.

This sequence belongs to the methyltransferase superfamily. tRNA (adenine-N(6)-)-methyltransferase family.

The protein resides in the cytoplasm. It catalyses the reaction adenosine(37) in tRNA1(Val) + S-adenosyl-L-methionine = N(6)-methyladenosine(37) in tRNA1(Val) + S-adenosyl-L-homocysteine + H(+). Functionally, specifically methylates the adenine in position 37 of tRNA(1)(Val) (anticodon cmo5UAC). The polypeptide is tRNA1(Val) (adenine(37)-N6)-methyltransferase (Pseudoalteromonas translucida (strain TAC 125)).